Reading from the N-terminus, the 397-residue chain is Mannan endo-1,4-beta-mannosidase 1 (397 aa).

Positions 1-23 (MSYARRSCICGLFLLFLALVCEA) are cleaved as a signal peptide. Positions 83 and 198 each coordinate substrate. Glutamate 199 acts as the Proton donor in catalysis. Residue tyrosine 276 coordinates substrate. Glutamate 316 (nucleophile) is an active-site residue. Tryptophan 354 serves as a coordination point for substrate.

The protein belongs to the glycosyl hydrolase 5 (cellulase A) family.

The protein localises to the secreted. It carries out the reaction Random hydrolysis of (1-&gt;4)-beta-D-mannosidic linkages in mannans, galactomannans and glucomannans.. The protein is Mannan endo-1,4-beta-mannosidase 1 (MAN1) of Solanum lycopersicum (Tomato).